The sequence spans 620 residues: Arginine--tRNA ligase (620 aa).

Residues 147 to 157 (ANPTGPIHIGG) carry the 'HIGH' region motif.

It belongs to the class-I aminoacyl-tRNA synthetase family. As to quaternary structure, monomer.

The protein localises to the cytoplasm. It catalyses the reaction tRNA(Arg) + L-arginine + ATP = L-arginyl-tRNA(Arg) + AMP + diphosphate. This chain is Arginine--tRNA ligase, found in Bifidobacterium longum (strain NCC 2705).